The following is a 393-amino-acid chain: NAD(P)H-quinone oxidoreductase subunit H, chloroplastic (393 aa).

It belongs to the complex I 49 kDa subunit family. In terms of assembly, NDH is composed of at least 16 different subunits, 5 of which are encoded in the nucleus.

It is found in the plastid. The protein resides in the chloroplast thylakoid membrane. It catalyses the reaction a plastoquinone + NADH + (n+1) H(+)(in) = a plastoquinol + NAD(+) + n H(+)(out). The catalysed reaction is a plastoquinone + NADPH + (n+1) H(+)(in) = a plastoquinol + NADP(+) + n H(+)(out). Functionally, NDH shuttles electrons from NAD(P)H:plastoquinone, via FMN and iron-sulfur (Fe-S) centers, to quinones in the photosynthetic chain and possibly in a chloroplast respiratory chain. The immediate electron acceptor for the enzyme in this species is believed to be plastoquinone. Couples the redox reaction to proton translocation, and thus conserves the redox energy in a proton gradient. The polypeptide is NAD(P)H-quinone oxidoreductase subunit H, chloroplastic (Nicotiana sylvestris (Wood tobacco)).